The primary structure comprises 412 residues: Probable cystathionine gamma-synthase 2 (412 aa).

Pyridoxal 5'-phosphate contacts are provided by Tyr-76, Arg-78, Gly-106, Met-107, Tyr-131, Ser-226, and Thr-228. The residue at position 229 (Lys-229) is an N6-(pyridoxal phosphate)lysine.

It belongs to the trans-sulfuration enzymes family. Pyridoxal 5'-phosphate serves as cofactor.

It catalyses the reaction O-phospho-L-homoserine + L-cysteine = L,L-cystathionine + phosphate. It carries out the reaction O-succinyl-L-homoserine + L-cysteine = L,L-cystathionine + succinate + H(+). The protein operates within amino-acid biosynthesis; L-methionine biosynthesis via de novo pathway; L-cystathionine from O-succinyl-L-homoserine: step 1/1. Functionally, catalyzes the first committed step of methionine (Met) biosynthesis. Catalyzes the formation of L-cystathionine from homoserine esters and L-cysteine, via a gamma-replacement reaction. The polypeptide is Probable cystathionine gamma-synthase 2 (Arabidopsis thaliana (Mouse-ear cress)).